The primary structure comprises 413 residues: Multifunctional CCA protein (413 aa).

ATP contacts are provided by glycine 8 and arginine 11. CTP-binding residues include glycine 8 and arginine 11. Positions 21 and 23 each coordinate Mg(2+). ATP contacts are provided by arginine 91, arginine 143, and arginine 146. Arginine 91, arginine 143, and arginine 146 together coordinate CTP. The HD domain occupies 232-333; sequence TGVHVMMVVD…VRFFERSDAL (102 aa).

Belongs to the tRNA nucleotidyltransferase/poly(A) polymerase family. Bacterial CCA-adding enzyme type 1 subfamily. Monomer. Can also form homodimers and oligomers. Mg(2+) serves as cofactor. Requires Ni(2+) as cofactor.

It carries out the reaction a tRNA precursor + 2 CTP + ATP = a tRNA with a 3' CCA end + 3 diphosphate. The catalysed reaction is a tRNA with a 3' CCA end + 2 CTP + ATP = a tRNA with a 3' CCACCA end + 3 diphosphate. Its function is as follows. Catalyzes the addition and repair of the essential 3'-terminal CCA sequence in tRNAs without using a nucleic acid template. Adds these three nucleotides in the order of C, C, and A to the tRNA nucleotide-73, using CTP and ATP as substrates and producing inorganic pyrophosphate. tRNA 3'-terminal CCA addition is required both for tRNA processing and repair. Also involved in tRNA surveillance by mediating tandem CCA addition to generate a CCACCA at the 3' terminus of unstable tRNAs. While stable tRNAs receive only 3'-terminal CCA, unstable tRNAs are marked with CCACCA and rapidly degraded. This chain is Multifunctional CCA protein, found in Burkholderia ambifaria (strain ATCC BAA-244 / DSM 16087 / CCUG 44356 / LMG 19182 / AMMD) (Burkholderia cepacia (strain AMMD)).